Here is a 219-residue protein sequence, read N- to C-terminus: ATP-dependent Clp protease proteolytic subunit 4 (219 aa).

Residue S125 is the Nucleophile of the active site. H150 is an active-site residue.

It belongs to the peptidase S14 family. As to quaternary structure, fourteen ClpP subunits assemble into 2 heptameric rings which stack back to back to give a disk-like structure with a central cavity, resembling the structure of eukaryotic proteasomes.

The protein localises to the cytoplasm. The catalysed reaction is Hydrolysis of proteins to small peptides in the presence of ATP and magnesium. alpha-casein is the usual test substrate. In the absence of ATP, only oligopeptides shorter than five residues are hydrolyzed (such as succinyl-Leu-Tyr-|-NHMec, and Leu-Tyr-Leu-|-Tyr-Trp, in which cleavage of the -Tyr-|-Leu- and -Tyr-|-Trp bonds also occurs).. Cleaves peptides in various proteins in a process that requires ATP hydrolysis. Has a chymotrypsin-like activity. Plays a major role in the degradation of misfolded proteins. This is ATP-dependent Clp protease proteolytic subunit 4 from Prochlorococcus marinus (strain MIT 9312).